The following is a 248-amino-acid chain: Probable transcriptional regulatory protein Nham_3525 (248 aa).

A disordered region spans residues M1–K21.

The protein belongs to the TACO1 family.

It is found in the cytoplasm. This is Probable transcriptional regulatory protein Nham_3525 from Nitrobacter hamburgensis (strain DSM 10229 / NCIMB 13809 / X14).